Reading from the N-terminus, the 207-residue chain is Superoxide dismutase [Mn] (207 aa).

4 residues coordinate Mn(2+): histidine 28, histidine 76, aspartate 160, and histidine 164.

Belongs to the iron/manganese superoxide dismutase family. In terms of assembly, homotetramer. Requires Mn(2+) as cofactor.

It localises to the secreted. The catalysed reaction is 2 superoxide + 2 H(+) = H2O2 + O2. Functionally, destroys superoxide anion radicals which are normally produced within the cells and which are toxic to biological systems. The chain is Superoxide dismutase [Mn] (sodA) from Mycolicibacterium smegmatis (Mycobacterium smegmatis).